Consider the following 245-residue polypeptide: Orotidine 5'-phosphate decarboxylase (245 aa).

Residues D22, K44, 71-80, T131, R192, Q201, G221, and R222 each bind substrate; that span reads DLKFHDIPNT. The Proton donor role is filled by K73.

Belongs to the OMP decarboxylase family. Type 1 subfamily. In terms of assembly, homodimer.

The enzyme catalyses orotidine 5'-phosphate + H(+) = UMP + CO2. It participates in pyrimidine metabolism; UMP biosynthesis via de novo pathway; UMP from orotate: step 2/2. Its function is as follows. Catalyzes the decarboxylation of orotidine 5'-monophosphate (OMP) to uridine 5'-monophosphate (UMP). This Klebsiella pneumoniae (strain 342) protein is Orotidine 5'-phosphate decarboxylase.